The sequence spans 233 residues: Large ribosomal subunit protein uL1 (233 aa).

It belongs to the universal ribosomal protein uL1 family. Part of the 50S ribosomal subunit.

Its function is as follows. Binds directly to 23S rRNA. The L1 stalk is quite mobile in the ribosome, and is involved in E site tRNA release. In terms of biological role, protein L1 is also a translational repressor protein, it controls the translation of the L11 operon by binding to its mRNA. This is Large ribosomal subunit protein uL1 from Zymomonas mobilis subsp. mobilis (strain ATCC 31821 / ZM4 / CP4).